A 235-amino-acid chain; its full sequence is Large ribosomal subunit protein uL1 (235 aa).

It belongs to the universal ribosomal protein uL1 family. Part of the 50S ribosomal subunit.

Its function is as follows. Binds directly to 23S rRNA. The L1 stalk is quite mobile in the ribosome, and is involved in E site tRNA release. In terms of biological role, protein L1 is also a translational repressor protein, it controls the translation of the L11 operon by binding to its mRNA. The sequence is that of Large ribosomal subunit protein uL1 from Prochlorococcus marinus (strain MIT 9312).